The sequence spans 687 residues: DNA-directed RNA polymerase subunit beta' (687 aa).

Zn(2+) contacts are provided by cysteine 69, cysteine 71, cysteine 87, and cysteine 90. Aspartate 495, aspartate 497, and aspartate 499 together coordinate Mg(2+).

The protein belongs to the RNA polymerase beta' chain family. RpoC1 subfamily. As to quaternary structure, in plastids the minimal PEP RNA polymerase catalytic core is composed of four subunits: alpha, beta, beta', and beta''. When a (nuclear-encoded) sigma factor is associated with the core the holoenzyme is formed, which can initiate transcription. Mg(2+) is required as a cofactor. Requires Zn(2+) as cofactor.

The protein resides in the plastid. Its subcellular location is the chloroplast. It catalyses the reaction RNA(n) + a ribonucleoside 5'-triphosphate = RNA(n+1) + diphosphate. Its function is as follows. DNA-dependent RNA polymerase catalyzes the transcription of DNA into RNA using the four ribonucleoside triphosphates as substrates. This Solanum tuberosum (Potato) protein is DNA-directed RNA polymerase subunit beta'.